We begin with the raw amino-acid sequence, 85 residues long: Cell division topological specificity factor (85 aa).

Belongs to the MinE family.

Prevents the cell division inhibition by proteins MinC and MinD at internal division sites while permitting inhibition at polar sites. This ensures cell division at the proper site by restricting the formation of a division septum at the midpoint of the long axis of the cell. In Cellvibrio japonicus (strain Ueda107) (Pseudomonas fluorescens subsp. cellulosa), this protein is Cell division topological specificity factor.